The primary structure comprises 38 residues: QQCAERGQSCNPYEGIECCGDILCIQPRIWPPVPGRCA.

Residue Gln1 is modified to Pyrrolidone carboxylic acid.

Post-translationally, contains disulfide bonds.

Inhibits trypsin-like proteases from the guts of the insect pests P.truncatus, P.americana, Acheta sp and Gryllus sp. The chain is Trypsin inhibitor 2 from Opuntia streptacantha (Prickly pear cactus).